Consider the following 194-residue polypeptide: 5-formyltetrahydrofolate cyclo-ligase (194 aa).

ATP contacts are provided by residues 6-10, 139-146, and Asp-177; these read KSQLR and GRGAGFYD.

It belongs to the 5-formyltetrahydrofolate cyclo-ligase family.

It carries out the reaction (6S)-5-formyl-5,6,7,8-tetrahydrofolate + ATP = (6R)-5,10-methenyltetrahydrofolate + ADP + phosphate. It functions in the pathway one-carbon metabolism; tetrahydrofolate interconversion. Functionally, involved in the removal of 5-formyltetrahydrofolate. In vitro, it is a potent inhibitor of various folate-dependent enzymes in the C1 metabolism network and in vivo it might function as a folate storage. 5-formyltetrahydrofolate is also used as an antifolate rescue agent in cancer chemotherapy. Catalyzes the irreversible ATP-dependent transformation of 5-formyltetrahydrofolate (5-CHO-THF) to form 5,10-methenyltetrahydrofolate (5,10-CH=THF). The reverse reaction is catalyzed by the serine hydroxymethyltransferase GlyA (SHMT). This Mycolicibacterium smegmatis (strain ATCC 700084 / mc(2)155) (Mycobacterium smegmatis) protein is 5-formyltetrahydrofolate cyclo-ligase.